The chain runs to 170 residues: Protein SprT (170 aa).

In terms of domain architecture, SprT-like spans 23–165; it reads QLANQHLGTD…RECGEKLQFV (143 aa). Residue His-78 participates in Zn(2+) binding. Glu-79 is an active-site residue. Zn(2+) is bound at residue His-82.

This sequence belongs to the SprT family. The cofactor is Zn(2+).

It is found in the cytoplasm. This chain is Protein SprT, found in Yersinia enterocolitica serotype O:8 / biotype 1B (strain NCTC 13174 / 8081).